Consider the following 611-residue polypeptide: uncharacterized protein (611 aa).

The protein belongs to the metallo-dependent hydrolases superfamily. N-acyl-D-amino-acid deacylase family.

This is an uncharacterized protein from Mycobacterium bovis (strain ATCC BAA-935 / AF2122/97).